Reading from the N-terminus, the 363-residue chain is MSKLKDKIDDSLNDRLNREKAIELARIQIEKDFGKGSLIKMGESPVGKGIESISSGSILLDEAIGVGGYPRGRIIEIFGPESSGKTTLTLQAISEVQKNGGIAAFIDAEHALDPVYAKALGVNIDELWLSQPDTGEQALEIAEYLIRSGGVDLIVVDSVAALTPQAEIDGEMGDCQIGLQARLMSKALRKITGILSKSKTCIMFINQLRMKIGVMFGNPETTTGGNALKFYSSLRLEVRKIEQVTGSSADDVVGNKVRVKVVKNKVAPPFRKIELVIYFGKGISREASILDASIKYKLIQKIGSWYSIGDDKLGQGRESAIIYLIKEKELTNELEIKLRKIIFEGLSPDSIEIGPPNVKKDKE.

79–86 (GPESSGKT) contributes to the ATP binding site.

This sequence belongs to the RecA family.

It localises to the cytoplasm. Its function is as follows. Can catalyze the hydrolysis of ATP in the presence of single-stranded DNA, the ATP-dependent uptake of single-stranded DNA by duplex DNA, and the ATP-dependent hybridization of homologous single-stranded DNAs. It interacts with LexA causing its activation and leading to its autocatalytic cleavage. The chain is Protein RecA from Borrelia turicatae (strain 91E135).